The chain runs to 555 residues: Suppressor of tumorigenicity 7 protein-like (555 aa).

4 helical membrane passes run A32–L52, F76–W96, L504–L524, and L531–V551.

This sequence belongs to the ST7 family.

Its subcellular location is the membrane. The chain is Suppressor of tumorigenicity 7 protein-like (ST7L) from Gallus gallus (Chicken).